Consider the following 1133-residue polypeptide: Protein TPR3 (1133 aa).

The LisH domain occupies 4 to 36; sequence LSRELVFLILQFLDEEKFKETVHKLEQESGFYF. The region spanning 34–92 is the CTLH domain; that stretch reads FYFNMKYFEDEVINGNWDEVERYLGGFTKVDDNRYSMKIFFEIRKQKYLEALDKHDRSK. A disordered region spans residues 287–307; it reads PTTANPSMDYPSGDSDHVSKR. WD repeat units follow at residues 348 to 388, 410 to 449, 455 to 496, 499 to 540, 543 to 586, 590 to 629, 634 to 673, 771 to 810, 837 to 875, 878 to 918, 921 to 960, and 1014 to 1053; these read SQGS…RLVL, DPTV…DIRQ, AHVG…KQFT, GHEA…SRVD, APGH…VKRT, FRKR…LLTT, GGLP…RLLR, MRTS…RNSS, NPEE…TMTT, PPPP…VKSK, GHSK…KLKS, and ENSS…LQCR. The interval 1099–1133 is disordered; it reads ESERKWGNPPPAENGSTSALSTPPNGASSSDQPER. The span at 1112–1133 shows a compositional bias: polar residues; sequence NGSTSALSTPPNGASSSDQPER.

As to quaternary structure, tetramer. Interacts with D53. Interacts with MODD and HDAC1. Interacts with WOX1. Interacts with MOF1. In terms of tissue distribution, expressed in panicles, stems, leaves, spikelets and seed endosperm.

Probable downstream regulator of strigolactones signaling. Functions in a complex with MODD and HDAC1 to down-regulate the histone acetylation level at BZIP46 target genes. BZIP46 is a positive regulator of abscisic acid (ABA) signaling and drought stress tolerance. This chain is Protein TPR3, found in Oryza sativa subsp. japonica (Rice).